Here is a 252-residue protein sequence, read N- to C-terminus: Cell division protein ZapD (252 aa).

It belongs to the ZapD family. As to quaternary structure, interacts with FtsZ.

The protein resides in the cytoplasm. Functionally, cell division factor that enhances FtsZ-ring assembly. Directly interacts with FtsZ and promotes bundling of FtsZ protofilaments, with a reduction in FtsZ GTPase activity. The sequence is that of Cell division protein ZapD from Cupriavidus taiwanensis (strain DSM 17343 / BCRC 17206 / CCUG 44338 / CIP 107171 / LMG 19424 / R1) (Ralstonia taiwanensis (strain LMG 19424)).